The chain runs to 567 residues: Urease subunit alpha (567 aa).

The 439-residue stretch at Gly129–Phe567 folds into the Urease domain. Residues His134, His136, and Lys217 each coordinate Ni(2+). The residue at position 217 (Lys217) is an N6-carboxylysine. Substrate is bound at residue His219. Ni(2+)-binding residues include His246 and His272. His320 functions as the Proton donor in the catalytic mechanism. Asp360 is a Ni(2+) binding site.

This sequence belongs to the metallo-dependent hydrolases superfamily. Urease alpha subunit family. In terms of assembly, heterotrimer of UreA (gamma), UreB (beta) and UreC (alpha) subunits. Three heterotrimers associate to form the active enzyme. It depends on Ni cation as a cofactor. In terms of processing, carboxylation allows a single lysine to coordinate two nickel ions.

Its subcellular location is the cytoplasm. The enzyme catalyses urea + 2 H2O + H(+) = hydrogencarbonate + 2 NH4(+). It participates in nitrogen metabolism; urea degradation; CO(2) and NH(3) from urea (urease route): step 1/1. This chain is Urease subunit alpha, found in Klebsiella pneumoniae (strain 342).